Consider the following 160-residue polypeptide: Large ribosomal subunit protein eL21 (160 aa).

2 stretches are compositionally biased toward basic and acidic residues: residues 112–123 and 136–145; these read NDQKKKEAKEKG and REAHFVRTNG. Positions 112 to 145 are disordered; the sequence is NDQKKKEAKEKGTWVQLKRQPAPPREAHFVRTNG.

It belongs to the eukaryotic ribosomal protein eL21 family. In terms of assembly, component of the large ribosomal subunit.

It localises to the cytoplasm. It is found in the cytosol. The protein localises to the endoplasmic reticulum. Its function is as follows. Component of the large ribosomal subunit. The ribosome is a large ribonucleoprotein complex responsible for the synthesis of proteins in the cell. The polypeptide is Large ribosomal subunit protein eL21 (RPL21) (Oryctolagus cuniculus (Rabbit)).